We begin with the raw amino-acid sequence, 869 residues long: 1-phosphatidylinositol 4,5-bisphosphate phosphodiesterase 1 (869 aa).

The region spanning 269–304 (VSTGQLLEFFQLADINHNGLLNYFEFEKFIKILKNR) is the EF-hand domain. Ca(2+)-binding residues include Asp-282, Asn-284, Asn-286, and Glu-293. In terms of domain architecture, PI-PLC X-box spans 382-520 (YSKPLNHYFI…LKHKILLKSK (139 aa)). Active-site residues include His-395 and His-439. Positions 518 and 520 each coordinate substrate. Residues 546 to 571 (ANEQELRMKDDSTNSSSATNSSSMQR) are disordered. Low complexity predominate over residues 558–568 (TNSSSATNSSS). In terms of domain architecture, PI-PLC Y-box spans 590 to 709 (ISGIHGIKFR…SGYVLKPKKL (120 aa)). Ser-614 and Arg-643 together coordinate substrate. The C2 domain occupies 713–862 (VTKAKMIPLI…EGEQYIFCTL (150 aa)).

In terms of assembly, interacts with SGD1. Ca(2+) is required as a cofactor.

The enzyme catalyses a 1,2-diacyl-sn-glycero-3-phospho-(1D-myo-inositol-4,5-bisphosphate) + H2O = 1D-myo-inositol 1,4,5-trisphosphate + a 1,2-diacyl-sn-glycerol + H(+). In terms of biological role, the production of the second messenger molecules diacylglycerol (DAG) and inositol 1,4,5-trisphosphate (IP3) is mediated by activated phosphatidylinositol-specific phospholipase C enzymes. Required for cell growth, osmoresistance and expression of GPD1. This chain is 1-phosphatidylinositol 4,5-bisphosphate phosphodiesterase 1 (PLC1), found in Saccharomyces cerevisiae (strain ATCC 204508 / S288c) (Baker's yeast).